The following is a 238-amino-acid chain: Large ribosomal subunit protein uL1 (238 aa).

The protein belongs to the universal ribosomal protein uL1 family. In terms of assembly, part of the 50S ribosomal subunit.

Functionally, binds directly to 23S rRNA. The L1 stalk is quite mobile in the ribosome, and is involved in E site tRNA release. Its function is as follows. Protein L1 is also a translational repressor protein, it controls the translation of the L11 operon by binding to its mRNA. The protein is Large ribosomal subunit protein uL1 of Nostoc sp. (strain PCC 7120 / SAG 25.82 / UTEX 2576).